We begin with the raw amino-acid sequence, 214 residues long: MFGRRSMADPPAPPAIILAGGLAQRMGGGDKALRMVGGRTLLALVIDRLASQCDILALSANGDPARFADYDLPVIADPVDGFRGPLAGVLAGLDWVAEHRPAARWMLSTPADCPFLPRDLVARLHQARIDQQADIAVAASAGRSHPVIALWPVGLRIDLRRALLADDIRKVDRFTARYPRAMAEWPVEPADPFFNANTPQDLAEAEGLAMREPD.

Residues 18–20, K31, D77, and D112 each bind GTP; that span reads LAG. D112 contributes to the Mg(2+) binding site.

It belongs to the MobA family. As to quaternary structure, monomer. Requires Mg(2+) as cofactor.

Its subcellular location is the cytoplasm. It catalyses the reaction Mo-molybdopterin + GTP + H(+) = Mo-molybdopterin guanine dinucleotide + diphosphate. Functionally, transfers a GMP moiety from GTP to Mo-molybdopterin (Mo-MPT) cofactor (Moco or molybdenum cofactor) to form Mo-molybdopterin guanine dinucleotide (Mo-MGD) cofactor. In Rhodopseudomonas palustris (strain HaA2), this protein is Molybdenum cofactor guanylyltransferase.